Here is a 144-residue protein sequence, read N- to C-terminus: Ribosome maturation factor RimP (144 aa).

This sequence belongs to the RimP family.

It localises to the cytoplasm. Functionally, required for maturation of 30S ribosomal subunits. This chain is Ribosome maturation factor RimP, found in Methylobacillus flagellatus (strain ATCC 51484 / DSM 6875 / VKM B-1610 / KT).